We begin with the raw amino-acid sequence, 434 residues long: Serine/threonine transporter SstT (434 aa).

The next 9 helical transmembrane spans lie at 14–34 (IVIGIIVGAVLGVMVPSWSFI), 41–61 (FVGALKAIAPLLVFLLIMSAI), 72–92 (FGTVIVLYLSATLFSSIAAVA), 135–155 (ALVEGNYLAILFWSLLIGSGL), 172–192 (TVSAVAQNVIQFAPFGIVGLL), 210–230 (LLMLLVATMVFVYLVVYPFMV), 282–302 (ISIPLGGSANSGGAAITVSIM), 316–336 (IFLALLLCFLSAISATGVSGI), and 351–371 (FGISNDIAMQVVGIGFIIGVV). The interval 414–434 (KGTAEVVTPEKANEAEESEQV) is disordered.

This sequence belongs to the dicarboxylate/amino acid:cation symporter (DAACS) (TC 2.A.23) family.

The protein localises to the cell membrane. It carries out the reaction L-serine(in) + Na(+)(in) = L-serine(out) + Na(+)(out). It catalyses the reaction L-threonine(in) + Na(+)(in) = L-threonine(out) + Na(+)(out). In terms of biological role, involved in the import of serine and threonine into the cell, with the concomitant import of sodium (symport system). The sequence is that of Serine/threonine transporter SstT from Lacticaseibacillus paracasei (strain ATCC 334 / BCRC 17002 / CCUG 31169 / CIP 107868 / KCTC 3260 / NRRL B-441) (Lactobacillus paracasei).